Here is a 395-residue protein sequence, read N- to C-terminus: Nuclear hormone receptor family member nhr-10 (395 aa).

A DNA-binding region (nuclear receptor) is located at residues glutamate 15–glutamine 90. 2 consecutive NR C4-type zinc fingers follow at residues cysteine 18–cysteine 38 and cysteine 54–cysteine 78. Residues proline 152–isoleucine 392 enclose the NR LBD domain.

It belongs to the nuclear hormone receptor family.

Its subcellular location is the nucleus. Probable transcription factor that acts in a feed-forward loop with nhr-68 to activate genes involved in the vitamin B12-independent breakdown of the short-chain fatty acid propionate. This pathway is triggered in response to a diet low in vitamin B12, when canonical vitamin B12-dependent propionate breakdown cannot function; the resulting accumulation of propionate is probably sensed by nhr-10 and/or nhr-68. The chain is Nuclear hormone receptor family member nhr-10 (nhr-10) from Caenorhabditis elegans.